The primary structure comprises 785 residues: Penicillin-binding protein 1A (785 aa).

The interval 1 to 61 is disordered; sequence MPPDDRLTAV…SGPGGPSGPG (61 aa). Residues 33–45 show a composition bias toward pro residues; that stretch reads SPPPKPPPPPPPG. Gly residues predominate over residues 46–59; it reads RGGGGPSGPGGPSG. The chain crosses the membrane as a helical span at residues 77-97; it reads IAVAVMVLLPLITFGMAYMIV. The interval 118 to 299 is transglycosylase; that stretch reads GSEIARIVPP…RWNWVLDGMV (182 aa). Catalysis depends on Glu151, which acts as the Proton donor; for transglycosylase activity. Residues 392-662 are transpeptidase; the sequence is AVVSIDPRTG…EGVKPLVNKW (271 aa). Catalysis depends on Ser426, which acts as the Acyl-ester intermediate; for transpeptidase activity. Disordered regions lie at residues 605–626, 690–726, and 738–785; these read SRGH…VQLG, ESFP…QPSV, and GITI…PPPP. Composition is skewed to pro residues over residues 708 to 721 and 743 to 758; these read PAAP…PTDP and IGPP…PGAP. Residues 759–775 show a composition bias toward low complexity; the sequence is GAPVGPGAPEVPVAPGA.

It is found in the cell membrane. It carries out the reaction [GlcNAc-(1-&gt;4)-Mur2Ac(oyl-L-Ala-gamma-D-Glu-L-Lys-D-Ala-D-Ala)](n)-di-trans,octa-cis-undecaprenyl diphosphate + beta-D-GlcNAc-(1-&gt;4)-Mur2Ac(oyl-L-Ala-gamma-D-Glu-L-Lys-D-Ala-D-Ala)-di-trans,octa-cis-undecaprenyl diphosphate = [GlcNAc-(1-&gt;4)-Mur2Ac(oyl-L-Ala-gamma-D-Glu-L-Lys-D-Ala-D-Ala)](n+1)-di-trans,octa-cis-undecaprenyl diphosphate + di-trans,octa-cis-undecaprenyl diphosphate + H(+). The enzyme catalyses Preferential cleavage: (Ac)2-L-Lys-D-Ala-|-D-Ala. Also transpeptidation of peptidyl-alanyl moieties that are N-acyl substituents of D-alanine.. It functions in the pathway cell wall biogenesis; peptidoglycan biosynthesis. Cell wall formation. Synthesis of cross-linked peptidoglycan from the lipid intermediates. The enzyme has a penicillin-insensitive transglycosylase N-terminal domain (formation of linear glycan strands) and a penicillin-sensitive transpeptidase C-terminal domain (cross-linking of the peptide subunits). This chain is Penicillin-binding protein 1A (ponA1), found in Mycolicibacterium smegmatis (strain ATCC 700084 / mc(2)155) (Mycobacterium smegmatis).